The chain runs to 394 residues: Putative agmatinase 1 (394 aa).

The N-terminal stretch at 1 to 20 (MALQSLFLILLAGAAQLAQA) is a signal peptide. Residues His186, Asp209, His211, Asp213, Asp307, and Asp309 each contribute to the Mn(2+) site.

The protein belongs to the arginase family. It depends on Mn(2+) as a cofactor.

It catalyses the reaction agmatine + H2O = urea + putrescine. In Schizosaccharomyces pombe (strain 972 / ATCC 24843) (Fission yeast), this protein is Putative agmatinase 1.